A 369-amino-acid chain; its full sequence is MEESLLPVYIHSAEYVELCDNVQSKVPRRASMVHSLIEAYGLLKEMRVVKPKVASMEEMAAFHTDSYLQHLHKVSEEGDNDDPETLEYGLGYDCPITEGIYDYAAAVGGATLTAAEQLMAGKTRIAINWPGGWHHAKKDEASGFCYLNDAVLGILKLREKFDRVLYVDMDLHHGDGVEDAFSFTSKVMTVSLHKFSPGFFPGTGDVSDIGLGKGRYYSVNVPLQDGIQDEKYYQICEGVLKEVFTTFNPEAVVLQLGADTIAGDPMCSFNMTPQGIGKCLKYVLQWQLPTLILGGGGYHLPNTARCWTYLTALIVGRTLSSEIPDHEFFTEYGPDYVLEVTPSCRPDRNDSQKVQEILQSIKGHLKQVV.

Residues Leu-5–Gly-316 form a histone deacetylase region. Asp-93 is a binding site for substrate. His-135 acts as the Proton acceptor in catalysis. Gly-143 serves as a coordination point for substrate. Positions 170, 172, and 259 each coordinate a divalent metal cation. Tyr-298 contacts substrate.

It belongs to the histone deacetylase family. HD type 1 subfamily. A divalent metal cation is required as a cofactor.

It is found in the nucleus. The protein resides in the chromosome. Its subcellular location is the cytoplasm. The enzyme catalyses N(6)-acetyl-L-lysyl-[histone] + H2O = L-lysyl-[histone] + acetate. It carries out the reaction N(6)-acetyl-L-lysyl-[protein] + H2O = L-lysyl-[protein] + acetate. The catalysed reaction is N(6)-(2E)-butenoyl-L-lysyl-[protein] + H2O = (2E)-2-butenoate + L-lysyl-[protein]. Its activity is regulated as follows. Its activity is inhibited by trichostatin A (TSA) and butyrate, 2 well known histone deacetylase inhibitors. In terms of biological role, histone deacetylase that catalyzes the deacetylation of lysine residues on the N-terminal part of the core histones (H2A, H2B, H3 and H4). Histone deacetylation gives a tag for epigenetic repression and plays an important role in transcriptional regulation, cell cycle progression and developmental events. Histone deacetylases act via the formation of large multiprotein complexes. Also involved in the deacetylation of non-histone proteins. In addition to protein deacetylase activity, also has protein-lysine deacylase activity: acts as a protein decrotonylase by mediating decrotonylation ((2E)-butenoyl) of histones. This is Histone deacetylase 8 (hdac8) from Xenopus tropicalis (Western clawed frog).